The following is a 299-amino-acid chain: Proline iminopeptidase (299 aa).

The 251-residue stretch at 29 to 279 (PLLLLHGGPG…SRHMAFIDEP (251 aa)) folds into the AB hydrolase-1 domain. S105 (nucleophile) is an active-site residue. D245 is a catalytic residue. Residue H272 is the Proton donor of the active site.

It belongs to the peptidase S33 family.

The protein localises to the cell envelope. The catalysed reaction is Release of N-terminal proline from a peptide.. Releases the N-terminal proline from various substrates. This Levilactobacillus brevis (strain ATCC 367 / BCRC 12310 / CIP 105137 / JCM 1170 / LMG 11437 / NCIMB 947 / NCTC 947) (Lactobacillus brevis) protein is Proline iminopeptidase.